The chain runs to 460 residues: Ribulose bisphosphate carboxylase large chain (460 aa).

Position 4 is an N6,N6,N6-trimethyllysine (K4). Residues N113 and T163 each coordinate substrate. K165 functions as the Proton acceptor in the catalytic mechanism. Residue K167 coordinates substrate. Mg(2+) contacts are provided by K191, D193, and E194. Position 191 is an N6-carboxylysine (K191). The active-site Proton acceptor is the H284. Substrate contacts are provided by R285, H317, and S369.

It belongs to the RuBisCO large chain family. Type I subfamily. Heterohexadecamer of 8 large chains and 8 small chains. Requires Mg(2+) as cofactor.

The protein resides in the plastid. It is found in the chloroplast. The catalysed reaction is 2 (2R)-3-phosphoglycerate + 2 H(+) = D-ribulose 1,5-bisphosphate + CO2 + H2O. It catalyses the reaction D-ribulose 1,5-bisphosphate + O2 = 2-phosphoglycolate + (2R)-3-phosphoglycerate + 2 H(+). In terms of biological role, ruBisCO catalyzes two reactions: the carboxylation of D-ribulose 1,5-bisphosphate, the primary event in carbon dioxide fixation, as well as the oxidative fragmentation of the pentose substrate in the photorespiration process. Both reactions occur simultaneously and in competition at the same active site. This Cunninghamia lanceolata (China fir) protein is Ribulose bisphosphate carboxylase large chain.